The sequence spans 115 residues: Large ribosomal subunit protein bL19 (115 aa).

Belongs to the bacterial ribosomal protein bL19 family.

Functionally, this protein is located at the 30S-50S ribosomal subunit interface and may play a role in the structure and function of the aminoacyl-tRNA binding site. The protein is Large ribosomal subunit protein bL19 of Nitratidesulfovibrio vulgaris (strain DSM 19637 / Miyazaki F) (Desulfovibrio vulgaris).